Consider the following 147-residue polypeptide: METLTAISRWLAKQHVVTWCVQQEGELWCANAFYLFDAQKVAFYILTEEKTRHAQMSGPQAAVAGTVNGQPKTVALIRGVQFKGEIRRLEGEESERARQAYNRRFPVARMLSAPVWEIRLDEIKFTDNTLGFGKKMIWLRNSGTEQA.

It belongs to the UPF0306 family.

This is UPF0306 protein YhbP from Escherichia coli (strain SMS-3-5 / SECEC).